We begin with the raw amino-acid sequence, 333 residues long: Replication factor C subunit 2 (333 aa).

An N-acetylalanine modification is found at A2. 55–62 (GPPGTGKT) serves as a coordination point for ATP.

It belongs to the activator 1 small subunits family. Heterotetramer of subunits RFC2, RFC3, RFC4 and RFC5 that can form a complex with RFC1.

It localises to the nucleus. May be involved in DNA replication and thus regulate cell proliferation. The chain is Replication factor C subunit 2 (RFC2) from Arabidopsis thaliana (Mouse-ear cress).